We begin with the raw amino-acid sequence, 133 residues long: ATP synthase epsilon chain (133 aa).

It belongs to the ATPase epsilon chain family. In terms of assembly, F-type ATPases have 2 components, CF(1) - the catalytic core - and CF(0) - the membrane proton channel. CF(1) has five subunits: alpha(3), beta(3), gamma(1), delta(1), epsilon(1). CF(0) has three main subunits: a, b and c.

The protein localises to the cell inner membrane. Its function is as follows. Produces ATP from ADP in the presence of a proton gradient across the membrane. This chain is ATP synthase epsilon chain, found in Paramagnetospirillum magneticum (strain ATCC 700264 / AMB-1) (Magnetospirillum magneticum).